A 389-amino-acid chain; its full sequence is Leucine aminopeptidase 1 (389 aa).

The N-terminal stretch at 1–18 (MKSAALLLPLYTAAFAAA) is a signal peptide. A propeptide spanning residues 19 to 89 (AFHHEHAQAV…TLNHRINAES (71 aa)) is cleaved from the precursor. Asn-99, Asn-146, and Asn-156 each carry an N-linked (GlcNAc...) asparagine glycan. Residues His-188, Asp-207, Glu-246, and Asp-273 each coordinate Zn(2+). Cys-322 and Cys-326 are oxidised to a cystine. His-355 is a binding site for Zn(2+).

It belongs to the peptidase M28 family. M28E subfamily. As to quaternary structure, monomer. Zn(2+) is required as a cofactor.

The protein localises to the secreted. Extracellular aminopeptidase that allows assimilation of proteinaceous substrates. In Pyrenophora tritici-repentis (strain Pt-1C-BFP) (Wheat tan spot fungus), this protein is Leucine aminopeptidase 1 (lap1).